The sequence spans 289 residues: tRNA dimethylallyltransferase (289 aa).

9–16 (GTTASGKT) serves as a coordination point for ATP. 11–16 (TASGKT) contributes to the substrate binding site. The interval 34–37 (DSLC) is interaction with substrate tRNA.

Belongs to the IPP transferase family. In terms of assembly, monomer. Requires Mg(2+) as cofactor.

It catalyses the reaction adenosine(37) in tRNA + dimethylallyl diphosphate = N(6)-dimethylallyladenosine(37) in tRNA + diphosphate. Functionally, catalyzes the transfer of a dimethylallyl group onto the adenine at position 37 in tRNAs that read codons beginning with uridine, leading to the formation of N6-(dimethylallyl)adenosine (i(6)A). The sequence is that of tRNA dimethylallyltransferase from Campylobacter jejuni subsp. doylei (strain ATCC BAA-1458 / RM4099 / 269.97).